Here is a 347-residue protein sequence, read N- to C-terminus: Probable ribonucleotide transport ATP-binding protein mkl (347 aa).

The ABC transporter domain occupies 16-252; it reads IEVKGLTKSF…DEPVVRQFLN (237 aa). An ATP-binding site is contributed by 48-55; sequence GPSGTGKS.

It belongs to the ABC transporter superfamily.

Its function is as follows. Not known, could be involved in the transport of ribonucleotides. In Mycobacterium leprae (strain TN), this protein is Probable ribonucleotide transport ATP-binding protein mkl (mkl).